The chain runs to 62 residues: Large ribosomal subunit protein uL29 (62 aa).

Belongs to the universal ribosomal protein uL29 family.

This chain is Large ribosomal subunit protein uL29, found in Geobacter metallireducens (strain ATCC 53774 / DSM 7210 / GS-15).